Consider the following 233-residue polypeptide: Homeobox protein Hox-B6b (233 aa).

The short motif at 136–141 (IYPWMQ) is the Antp-type hexapeptide element. A DNA-binding region (homeobox) is located at residues 155-214 (GRRGRQTYTRYQTLELEKEFHFNRYLTRRRRIEISHALCLTERQIKIWFQNRRMKWKKEN). The disordered stretch occupies residues 213 to 233 (ENKLLNPSKTPEEEEEAEKKS). Residues 224-233 (EEEEEAEKKS) show a composition bias toward acidic residues.

It belongs to the Antp homeobox family.

It localises to the nucleus. Sequence-specific transcription factor which is part of a developmental regulatory system that provides cells with specific positional identities on the anterior-posterior axis. In Takifugu rubripes (Japanese pufferfish), this protein is Homeobox protein Hox-B6b (hoxb6b).